Here is a 188-residue protein sequence, read N- to C-terminus: dCTP deaminase (188 aa).

DCTP contacts are provided by residues 111–116 (KSTYAR), 135–137 (TLE), glutamine 156, tyrosine 170, and glutamine 180. Catalysis depends on glutamate 137, which acts as the Proton donor/acceptor.

The protein belongs to the dCTP deaminase family. Homotrimer.

The catalysed reaction is dCTP + H2O + H(+) = dUTP + NH4(+). It participates in pyrimidine metabolism; dUMP biosynthesis; dUMP from dCTP (dUTP route): step 1/2. Functionally, catalyzes the deamination of dCTP to dUTP. This Thiobacillus denitrificans (strain ATCC 25259 / T1) protein is dCTP deaminase.